The sequence spans 103 residues: Large ribosomal subunit protein eL21 (103 aa).

It belongs to the eukaryotic ribosomal protein eL21 family.

This is Large ribosomal subunit protein eL21 from Sulfurisphaera tokodaii (strain DSM 16993 / JCM 10545 / NBRC 100140 / 7) (Sulfolobus tokodaii).